The sequence spans 151 residues: Putative pre-16S rRNA nuclease (151 aa).

This sequence belongs to the YqgF nuclease family.

It is found in the cytoplasm. In terms of biological role, could be a nuclease involved in processing of the 5'-end of pre-16S rRNA. The sequence is that of Putative pre-16S rRNA nuclease from Onion yellows phytoplasma (strain OY-M).